Reading from the N-terminus, the 313-residue chain is Putative stilbene synthase 2 (313 aa).

Cys88 is a catalytic residue. Substrate contacts are provided by residues Leu191 and 229 to 231 (GGP).

It belongs to the thiolase-like superfamily. Chalcone/stilbene synthases family. Homodimer.

It localises to the cytoplasm. It carries out the reaction 4-coumaroyl-CoA + 3 malonyl-CoA + 3 H(+) = trans-resveratrol + 4 CO2 + 4 CoA. It participates in phytoalexin biosynthesis; 3,4',5-trihydroxystilbene biosynthesis; 3,4',5-trihydroxystilbene from trans-4-coumarate: step 2/2. In Arachis hypogaea (Peanut), this protein is Putative stilbene synthase 2.